Here is a 449-residue protein sequence, read N- to C-terminus: Trigger factor (449 aa).

Residues 173-258 (GDRVTLDFVG…LKKVEWAHLP (86 aa)) enclose the PPIase FKBP-type domain.

Belongs to the FKBP-type PPIase family. Tig subfamily.

It is found in the cytoplasm. It catalyses the reaction [protein]-peptidylproline (omega=180) = [protein]-peptidylproline (omega=0). Its function is as follows. Involved in protein export. Acts as a chaperone by maintaining the newly synthesized protein in an open conformation. Functions as a peptidyl-prolyl cis-trans isomerase. In Cupriavidus metallidurans (strain ATCC 43123 / DSM 2839 / NBRC 102507 / CH34) (Ralstonia metallidurans), this protein is Trigger factor.